Consider the following 271-residue polypeptide: Phosphate import ATP-binding protein PstB 2 (271 aa).

Positions 1–20 are disordered; that stretch reads MLTKKPEINTILQTTPDPHS. The ABC transporter domain maps to 25–266; the sequence is MATEDLHVYY…PQEKQTEDYI (242 aa). Position 57–64 (57–64) interacts with ATP; it reads GPSGCGKS.

It belongs to the ABC transporter superfamily. Phosphate importer (TC 3.A.1.7) family. As to quaternary structure, the complex is composed of two ATP-binding proteins (PstB), two transmembrane proteins (PstC and PstA) and a solute-binding protein (PstS).

It localises to the cell membrane. It catalyses the reaction phosphate(out) + ATP + H2O = ADP + 2 phosphate(in) + H(+). In terms of biological role, part of the ABC transporter complex PstSACB involved in phosphate import. Responsible for energy coupling to the transport system. This is Phosphate import ATP-binding protein PstB 2 from Listeria innocua serovar 6a (strain ATCC BAA-680 / CLIP 11262).